A 600-amino-acid polypeptide reads, in one-letter code: PWWP domain-containing protein 2B (600 aa).

Disordered stretches follow at residues 81-115 (ETGP…PVPA), 143-171 (WVPQ…LILS), 186-350 (KSTV…LGDG), 366-408 (GCPR…PQGK), and 426-477 (DCTS…TVPP). Over residues 104-115 (EPPPPLIPPVPA) the composition is skewed to pro residues. Residues 151–160 (TIKRTRRRLS) are compositionally biased toward basic residues. Residues 187–200 (STVSPQEASPSPLN) show a composition bias toward polar residues. Phosphoserine occurs at positions 190 and 210. Residues 239 to 252 (EKREEDRVAGERVP) are compositionally biased toward basic and acidic residues. The residue at position 254 (Ser-254) is a Phosphoserine. A compositionally biased stretch (polar residues) spans 286–297 (PQQSLQNGSQDS). The segment covering 298 to 309 (EVSRDVEPRGGG) has biased composition (basic and acidic residues). Positions 328 to 339 (PVPPISDLPPPK) are enriched in pro residues. Residues 381 to 395 (DGSSHGLEDLSSGSS) show a composition bias toward low complexity. Positions 443–456 (SSGSEVTSPDTGDL) are enriched in polar residues. Ser-457 carries the phosphoserine modification. Positions 457-468 (SSGDSASVPSSS) are enriched in low complexity. The 61-residue stretch at 500 to 560 (VGDIVWGKIH…ISKLSPFSEF (61 aa)) folds into the PWWP domain.

In terms of assembly, component of a MTA1-specific subcomplex of the NuRD complex composed of PWWP2B, MTA1 and HDAC1 but does not contain CHD4 and MBD3. Interacts with MTA1, MTA2, MTA3, HDAC1, HDAC2, RBBP4, RBBP7, BRCC3 and ZNF516. Does not interact with CHD4 and MBD3. Deubiquitinated by BRCC3; leading to its stabilization. As to expression, expressed in the brown adipose tissue.

Its subcellular location is the nucleus. Functionally, chromatin-binding protein that acts as an adapter between distinct nucleosome components (H3K36me3 or H2A.Z) and chromatin-modifying complexes, contributing to the regulation of the levels of histone acetylation at actively transcribed genes. Competes with CHD4 and MBD3 for interaction with MTA1 to form a NuRD subcomplex, preventing the formation of full NuRD complex (containing CHD4 and MBD3), leading to recruitment of HDACs to gene promoters resulting in turn in the deacetylation of nearby H3K27 and H2A.Z. Plays a role in facilitating transcriptional elongation through regulation of histone acetylation. Negatively regulates brown adipocyte thermogenesis by interacting with and stabilizing HDAC1 at the UCP1 gene promoter, thereby promoting histone deacetylation at the promoter leading to the repression of UCP1 expression. This is PWWP domain-containing protein 2B (Pwwp2b) from Mus musculus (Mouse).